The sequence spans 647 residues: Neuronal PAS domain-containing protein 4-like (647 aa).

Residues 16 to 29 form a basic motif; degenerate region; the sequence is KRFRSTKGASKARR. Residues 16–67 enclose the bHLH domain; sequence KRFRSTKGASKARRDQMNSEIRNLRALLPISPEHRLSYLHSMSITCTYIRKS. The segment at 30-67 is helix-loop-helix motif; it reads DQMNSEIRNLRALLPISPEHRLSYLHSMSITCTYIRKS. 2 consecutive PAS domains span residues 117-181 and 238-274; these read VLQA…SPSG and SADMRLASASSSVLFHLGFSADELIGRSWYELLHPDD.

As to quaternary structure, heterodimer; efficient DNA binding requires dimerization with another bHLH protein. As to expression, specifically expressed in endothelial and hematopoietic precursor cells.

It is found in the nucleus. Its function is as follows. Transcription factor specifically expressed in endothelial and hematopoietic precursor cells that acts as a key regulator of the endothelial differentiation cascade. Acts as an early-response transcription factor that regulates the expression of early regulators of endothelial and haematopoietic differentiation, such as etv2 and tal1. The polypeptide is Neuronal PAS domain-containing protein 4-like (Danio rerio (Zebrafish)).